Here is a 521-residue protein sequence, read N- to C-terminus: Lymphocyte activation gene 3 protein (521 aa).

Positions 1 to 23 (MREDLLLGFLLLGLLWEAPVVSS) are cleaved as a signal peptide. Topologically, residues 24–442 (GPGKELPVVW…ISGDLKGGHL (419 aa)) are extracellular. The Ig-like V-type domain maps to 37–163 (GAPVHLPCSL…LSCSLRLRVG (127 aa)). The interval 37-246 (GAPVHLPCSL…LTYRDGFNVS (210 aa)) is interaction with FGL1. A disulfide bridge connects residues Cys44 and Cys156. 3 consecutive Ig-like C2-type domains span residues 165-246 (ASMI…FNVS), 258-341 (PVAP…ATVT), and 345-412 (ITVT…EGQR). An N-linked (GlcNAc...) asparagine glycan is attached at Asn184. Cys185 and Cys235 are oxidised to a cystine. Residues Asn244, Asn309, Asn337, and Asn381 are each glycosylated (N-linked (GlcNAc...) asparagine). Cys276 and Cys327 are disulfide-bonded. An intrachain disulfide couples Cys363 to Cys405. A connecting peptide region spans residues 422–442 (ESSSGAHSARRISGDLKGGHL). The chain crosses the membrane as a helical span at residues 443-463 (VLVLILGALSLFLLVAGAFGF). Residues 464 to 521 (HWWRKQLLLRRFSALEHGIQPFPAQRKIEELERELETEMGQEPEPEPEPQLEPEPRQL) lie on the Cytoplasmic side of the membrane. The KIEELE motif signature appears at 490-495 (KIEELE). The 13 X 2 AA tandem repeats of E-X stretch occupies residues 493–518 (ELERELETEMGQEPEPEPEPQLEPEP). A disordered region spans residues 493–521 (ELERELETEMGQEPEPEPEPQLEPEPRQL). Acidic residues predominate over residues 500–514 (TEMGQEPEPEPEPQL).

This sequence belongs to the LAG3 family. As to quaternary structure, interacts with MHC class II (MHC-II); selectively recognizes stable complexes of peptide and MHC-II. Interacts with FGL1 (via the Fibrinogen C-terminal domain). Post-translationally, proteolytically cleaved by ADAM10 and ADAM17 within the connecting peptide region, leading to release of Secreted lymphocyte activation gene 3 protein (sLAG-3). ADAM10 mediates constitutive cleavage, but cleavage increases following T-cell activation, whereas shedding by ADAM17 is induced by TCR signaling in a PRKCQ-dependent manner. Primarily expressed in activated CD4(+) and CD8(+) T-cells. Also expressed in a subset of regulatory T-cells (Tregs), such as natural CD4(+)CD25(+) Tregs. Also expressed on plasmacytoid dendritic cells (pDCs).

Its subcellular location is the cell membrane. The protein resides in the secreted. In terms of biological role, lymphocyte activation gene 3 protein: Inhibitory receptor on antigen activated T-cells. Delivers inhibitory signals upon binding to ligands, such as FGL1. FGL1 constitutes a major ligand of LAG3 and is responsible for LAG3 T-cell inhibitory function. Following TCR engagement, LAG3 associates with CD3-TCR in the immunological synapse and directly inhibits T-cell activation. May inhibit antigen-specific T-cell activation in synergy with PDCD1/PD-1, possibly by acting as a coreceptor for PDCD1/PD-1. Negatively regulates the proliferation, activation, effector function and homeostasis of both CD8(+) and CD4(+) T-cells. Also mediates immune tolerance: constitutively expressed on a subset of regulatory T-cells (Tregs) and contributes to their suppressive function. Also acts as a negative regulator of plasmacytoid dendritic cell (pDCs) activation. Binds MHC class II (MHC-II); the precise role of MHC-II-binding is however unclear. Its function is as follows. May function as a ligand for MHC class II (MHC-II) on antigen-presenting cells (APC), promoting APC activation/maturation and driving Th1 immune response. The sequence is that of Lymphocyte activation gene 3 protein from Mus musculus (Mouse).